The following is a 176-amino-acid chain: ATP synthase subunit b (176 aa).

Residues 26–45 traverse the membrane as a helical segment; sequence VINLAIIIGVLVYFGRGLLG.

It belongs to the ATPase B chain family. In terms of assembly, F-type ATPases have 2 components, F(1) - the catalytic core - and F(0) - the membrane proton channel. F(1) has five subunits: alpha(3), beta(3), gamma(1), delta(1), epsilon(1). F(0) has four main subunits: a(1), b(1), b'(1) and c(10-14). The alpha and beta chains form an alternating ring which encloses part of the gamma chain. F(1) is attached to F(0) by a central stalk formed by the gamma and epsilon chains, while a peripheral stalk is formed by the delta, b and b' chains.

It localises to the cellular thylakoid membrane. Its function is as follows. F(1)F(0) ATP synthase produces ATP from ADP in the presence of a proton or sodium gradient. F-type ATPases consist of two structural domains, F(1) containing the extramembraneous catalytic core and F(0) containing the membrane proton channel, linked together by a central stalk and a peripheral stalk. During catalysis, ATP synthesis in the catalytic domain of F(1) is coupled via a rotary mechanism of the central stalk subunits to proton translocation. Functionally, component of the F(0) channel, it forms part of the peripheral stalk, linking F(1) to F(0). This is ATP synthase subunit b from Synechococcus sp. (strain PCC 6716).